Here is a 392-residue protein sequence, read N- to C-terminus: GTPase Obg (392 aa).

The 159-residue stretch at 1–159 (MKFVDEATIL…RDLQLELMLL (159 aa)) folds into the Obg domain. The interval 127-146 (NTRFKSSVNRTPRQKTMGTP) is disordered. A compositionally biased stretch (polar residues) spans 129 to 143 (RFKSSVNRTPRQKTM). The region spanning 160–333 (ADVGMLGLPN…LCWDVMAFIK (174 aa)) is the OBG-type G domain. Residues 166-173 (GLPNAGKS), 191-195 (FTTLV), 213-216 (DIPG), 283-286 (NKVD), and 314-316 (SAA) contribute to the GTP site. Serine 173 and threonine 193 together coordinate Mg(2+). The tract at residues 360-392 (QLEEAQPEVEEDDDWDDDWDEDDEEGVETIYQR) is disordered. A compositionally biased stretch (acidic residues) spans 364–386 (AQPEVEEDDDWDDDWDEDDEEGV).

Belongs to the TRAFAC class OBG-HflX-like GTPase superfamily. OBG GTPase family. In terms of assembly, monomer. Mg(2+) is required as a cofactor.

Its subcellular location is the cytoplasm. An essential GTPase which binds GTP, GDP and possibly (p)ppGpp with moderate affinity, with high nucleotide exchange rates and a fairly low GTP hydrolysis rate. Plays a role in control of the cell cycle, stress response, ribosome biogenesis and in those bacteria that undergo differentiation, in morphogenesis control. This is GTPase Obg from Erwinia tasmaniensis (strain DSM 17950 / CFBP 7177 / CIP 109463 / NCPPB 4357 / Et1/99).